The following is a 143-amino-acid chain: Large ribosomal subunit protein uL11 (143 aa).

It belongs to the universal ribosomal protein uL11 family. In terms of assembly, part of the ribosomal stalk of the 50S ribosomal subunit. Interacts with L10 and the large rRNA to form the base of the stalk. L10 forms an elongated spine to which L12 dimers bind in a sequential fashion forming a multimeric L10(L12)X complex. One or more lysine residues are methylated.

In terms of biological role, forms part of the ribosomal stalk which helps the ribosome interact with GTP-bound translation factors. The protein is Large ribosomal subunit protein uL11 of Delftia acidovorans (strain DSM 14801 / SPH-1).